The primary structure comprises 163 residues: Ureidoglycolate lyase (163 aa).

It belongs to the ureidoglycolate lyase family. In terms of assembly, homodimer. The cofactor is Ni(2+).

It carries out the reaction (S)-ureidoglycolate = urea + glyoxylate. It functions in the pathway nitrogen metabolism; (S)-allantoin degradation. Its function is as follows. Catalyzes the catabolism of the allantoin degradation intermediate (S)-ureidoglycolate, generating urea and glyoxylate. Involved in the utilization of allantoin as nitrogen source. In Mesorhizobium japonicum (strain LMG 29417 / CECT 9101 / MAFF 303099) (Mesorhizobium loti (strain MAFF 303099)), this protein is Ureidoglycolate lyase.